Consider the following 523-residue polypeptide: Acetyl-coenzyme A carboxylase carboxyl transferase subunit beta, chloroplastic (523 aa).

The CoA carboxyltransferase N-terminal domain occupies 224 to 523; sequence FWVICENCHK…FVPSNQNSIK (300 aa). Cysteine 228, cysteine 231, cysteine 247, and cysteine 250 together coordinate Zn(2+). The C4-type zinc finger occupies 228–250; sequence CENCHKFNYKRLFKSKMNICEEC.

Belongs to the AccD/PCCB family. Acetyl-CoA carboxylase is a heterohexamer composed of biotin carboxyl carrier protein, biotin carboxylase and 2 subunits each of ACCase subunit alpha and ACCase plastid-coded subunit beta (accD). Zn(2+) serves as cofactor.

It localises to the plastid. The protein localises to the chloroplast stroma. It carries out the reaction N(6)-carboxybiotinyl-L-lysyl-[protein] + acetyl-CoA = N(6)-biotinyl-L-lysyl-[protein] + malonyl-CoA. It functions in the pathway lipid metabolism; malonyl-CoA biosynthesis; malonyl-CoA from acetyl-CoA: step 1/1. In terms of biological role, component of the acetyl coenzyme A carboxylase (ACC) complex. Biotin carboxylase (BC) catalyzes the carboxylation of biotin on its carrier protein (BCCP) and then the CO(2) group is transferred by the transcarboxylase to acetyl-CoA to form malonyl-CoA. In Cucumis sativus (Cucumber), this protein is Acetyl-coenzyme A carboxylase carboxyl transferase subunit beta, chloroplastic.